The primary structure comprises 429 residues: Polypyrimidine tract-binding protein homolog 2 (429 aa).

Ser2 is subject to N-acetylserine. 3 consecutive RRM domains span residues 18–96, 110–197, and 243–323; these read KVLH…YSNR, GNVL…YSAH, and SNVL…YSRH. Positions 331–429 are disordered; the sequence is NNDRSRDYTM…QHYGGPGPMH (99 aa). A compositionally biased stretch (low complexity) spans 367–381; the sequence is GGSHHQQQQQPQGGW. Over residues 382 to 397 the composition is skewed to gly residues; that stretch reads VQPGGQGSMGMGGGGH.

Its subcellular location is the nucleus. Functionally, plays a role in pre-mRNA splicing. Binds to the polypyrimidine tract of introns. May promote the binding of U2 snRNP to pre-mRNA. The chain is Polypyrimidine tract-binding protein homolog 2 from Arabidopsis thaliana (Mouse-ear cress).